The chain runs to 224 residues: Phosphoglycolate phosphatase (224 aa).

D8 acts as the Nucleophile in catalysis. The Mg(2+) site is built by D8, D10, G11, and G43. K151 is a binding site for substrate. D174, S175, and D178 together coordinate Mg(2+).

Belongs to the HAD-like hydrolase superfamily. Archaeal SPP-like hydrolase family. Homodimer. It depends on Mg(2+) as a cofactor.

The enzyme catalyses 2-phosphoglycolate + H2O = glycolate + phosphate. With respect to regulation, inhibited by Ca(2+) ions and by high chloride ion concentration. By contrast, low chloride concentration (up to 50 mM) slightly activate the enzyme. In terms of biological role, catalyzes the dephosphorylation of 2-phosphoglycolate. Also has significant, but less efficient, pyrophosphatase activity, since it is able to catalyze the release of phosphate from inorganic pyrophosphate (PPi). This Thermoplasma acidophilum (strain ATCC 25905 / DSM 1728 / JCM 9062 / NBRC 15155 / AMRC-C165) protein is Phosphoglycolate phosphatase.